The sequence spans 225 residues: PKHD-type hydroxylase YbiX (225 aa).

The Fe2OG dioxygenase domain maps to 78–177 (TLSTPLFNRY…RVASFMWIQS (100 aa)). Fe cation-binding residues include H96, D98, and H158. R168 provides a ligand contact to 2-oxoglutarate.

Requires Fe(2+) as cofactor. The cofactor is L-ascorbate.

This Shigella flexneri serotype 5b (strain 8401) protein is PKHD-type hydroxylase YbiX.